We begin with the raw amino-acid sequence, 729 residues long: Solute carrier family 15 member 2 (729 aa).

Residues 1 to 34 (MNPFQKNESKETLFSPVSTEEMLPGPPSPPKKST) form a disordered region. Residues 1 to 57 (MNPFQKNESKETLFSPVSTEEMLPGPPSPPKKSTPKLFGSSYPLSIAFIVVNEFCER) lie on the Cytoplasmic side of the membrane. Ser-9 is subject to Phosphoserine. Position 12 is a phosphothreonine (Thr-12). Ser-28 is modified (phosphoserine). The chain crosses the membrane as a helical span at residues 58 to 78 (FSYYGMKAVLTLYFLYFLHWN). Over 79 to 87 (EDTSTSVYH) the chain is Extracellular. A helical membrane pass occupies residues 88–108 (AFSSLCYFTPILGAAIADSWL). Residues 109–113 (GKFKT) are Cytoplasmic-facing. Residues 114–134 (IIYLSLVYVLGHVFKSLGAIP) form a helical membrane-spanning segment. Over 135–139 (ILGGK) the chain is Extracellular. A helical membrane pass occupies residues 140 to 160 (MLHTILSLVGLSLIALGTGGI). Residues 161 to 183 (KPCVAAFGGDQFEEEHAEARTRY) are Cytoplasmic-facing. A helical membrane pass occupies residues 184–204 (FSVFYLSINAGSLISTFITPM). Residues 205–217 (LRGDVKCFGEDCY) are Extracellular-facing. The chain crosses the membrane as a helical span at residues 218–238 (ALAFGIPGLLMVLALVVFAMG). Residues 239-295 (SKMYRKPPPEGNIVAQVTKCIWFAICNRFRNRSEDIPKRQHWLDWAAEKYPKHLIMD) are Cytoplasmic-facing. Residues 296 to 316 (VKALTRILFLYIPLPMFWALL) traverse the membrane as a helical segment. Residues 317 to 343 (DQQGSRWTLQANKMDGDLGFFVLQPDQ) are Extracellular-facing. The chain crosses the membrane as a helical span at residues 344-364 (MQVLNPFLVLVFIPLFDLVIY). Residues 365–380 (RLISKCGVNFSSLRKM) lie on the Cytoplasmic side of the membrane. A helical membrane pass occupies residues 381 to 401 (AVGMILACLAFAVAALVEIKI). Residues 402 to 611 (NGMIHPQPAS…PANKLSIAWQ (210 aa)) are Extracellular-facing. The segment at 402-611 (NGMIHPQPAS…PANKLSIAWQ (210 aa)) is extracellular domain (ECD). N-linked (GlcNAc...) asparagine glycans are attached at residues Asn-448, Asn-472, Asn-528, and Asn-587. Residues 612-632 (LPQYVLVTAAEVMFSVTGLEF) form a helical membrane-spanning segment. The Cytoplasmic segment spans residues 633 to 643 (SYSQAPSSMKS). The chain crosses the membrane as a helical span at residues 644–664 (VLQAAWLLTVAVGNIIVLIVA). Topologically, residues 665–674 (QFSGLVQWAE) are extracellular. A helical transmembrane segment spans residues 675–695 (FVLFSCLLLVVCLIFSVMGYY). Over 696 to 729 (YVPLKSEGIHEATEKQIPHIQGNMINLETKNTRL) the chain is Cytoplasmic.

Belongs to the major facilitator superfamily. Proton-dependent oligopeptide transporter (POT/PTR) (TC 2.A.17) family. As to quaternary structure, interacts (via extracellular domain region) with trypsin. As to expression, expressed in kidney brush border cells (at protein level). Highly expressed in macrophages.

It localises to the apical cell membrane. It is found in the cytoplasmic vesicle. The protein localises to the phagosome membrane. Its subcellular location is the cell membrane. The catalysed reaction is N-acetyl-D-muramoyl-L-alanyl-D-isoglutamine(out) + 3 H(+)(out) = N-acetyl-D-muramoyl-L-alanyl-D-isoglutamine(in) + 3 H(+)(in). The enzyme catalyses a dipeptide(out) + 2 H(+)(out) = a dipeptide(in) + 2 H(+)(in). It catalyses the reaction glycyl-L-leucine(out) + 2 H(+)(out) = glycyl-L-leucine(in) + 2 H(+)(in). It carries out the reaction glycyl-L-lysine(out) + 2 H(+)(out) = glycyl-L-lysine(in) + 2 H(+)(in). The catalysed reaction is glycyl-L-glutamate(out) + 3 H(+)(out) = glycyl-L-glutamate(in) + 3 H(+)(in). The enzyme catalyses L-alanyl-L-alanine(out) + 2 H(+)(out) = L-alanyl-L-alanine(in) + 2 H(+)(in). It catalyses the reaction an L-amino acid tripeptide(out) + 2 H(+)(out) = an L-amino acid tripeptide(in) + 2 H(+)(in). It carries out the reaction carnosine(out) + 2 H(+)(out) = carnosine(in) + 2 H(+)(in). Its function is as follows. Proton-coupled amino-acid transporter that transports oligopeptides of 2 to 4 amino acids with a preference for dipeptides. Transports neutral and anionic dipeptides with a proton to peptide stoichiometry of 2:1 or 3:1. In kidney, involved in the absorption of circulating di- and tripeptides from the glomerular filtrate. Can also transport beta-lactam antibiotics, such as the aminocephalosporin cefadroxil, and other antiviral and anticancer drugs. Transports the dipeptide-like aminopeptidase inhibitor bestatin. Also able to transport carnosine. Involved in innate immunity by promoting the detection of microbial pathogens by NOD-like receptors (NLRs). Mediates transport of bacterial peptidoglycans across the plasma membrane or, in macrophages, the phagosome membrane: catalyzes the transport of certain bacterial peptidoglycans, such as muramyl dipeptide (MDP), the NOD2 ligand. The chain is Solute carrier family 15 member 2 from Mus musculus (Mouse).